Consider the following 1188-residue polypeptide: MFTYVSKFFTNPDRNREDILESLDRENSFLDQKLMEEKMDQQLKANPNEINGVLSNKIAELTHGLSEMDVSKESSCTARKGVITSLDGDRGVIDKDVLFETKVAEDIILDLHVGCVVEYLTFTTGEAMRVVKVKSILEHSWEDTSQKEIEKAVDNLKNEKPTFFNTETRSVLGLISQRLASSIDVETEYGQLTVELDNIEMNFIPTNGDRVRLECNIQLDDGFVDKQGEILEVTKLFPTRIQEGEKCIVERVYVHMVVLGPETYILKTDLPTGTDLHLGDIVLADLIECQYSKFTRRAIKITPLEKNFGATKLTQQSSMGSSGSGKAVTVTGVNRFITAELWQKESVSLKLTNNLNRTLRLESITVCNDSESQLSVVSPLESKEISSGSEITVTFEIHTQFLGEAIEKYVLNFDLLKVRRVFTVIVCKTKEEVAEAEKRMIAAEALMAPGRNSQERSRFYANQVWCNKVDVIPGQQIVTKRRFVALRLGCFEVPKELRQICLTSERRQEMIKAIEQHYSFLTEPLSIKTYMHRFRLLLHLEEIECFVNFRNYDRDRAHFLRDGEFLTLQIENLAERRPSLVIGDTLRVINPWSDPDSQTTKSYEGIIHKVLFDRILLKFHSSFQEKYNGEDYRLEFYFSRYSFRKQHHAISKIVGVMGEDFLFPSKVTKRENPQLDVYMKDDDMYLYDSKLEWYNQSLNSIQKRAVFNILRGEAENIPYVLFGPPGSGKTMTLIETLLQLVRNLPGARILVGTPSNSSADLVTKRLIDSKALLQGDFIRLVSYNQVEKDLIPPEIMSYCATSDVGAVGSCEDKMMVTESGLKLRCQAKFIGTHRITISTCTTLGNFLQLGFPAGHFTHVLFDEAGQCTEPETMVPIVMLTKKRSQVVLSGDPRQLQSIVTSRIASKMGFSISFLERLLERSPYRKDLQRFPESSGYNPLVLTKLLYNYRALPSIMSIYSRLFYDDELIPVLSEKDSRESRLLSKLRCVFESEKDIPQAHGTFFYGIIGENRQNNDSPSWFNPQEVREVFLMTIALYRANVTADQIGIITPYQKQVKMLRSMFIGTDVVMPKIGSVEEFQGQERDIILISTVRSSEEILRMDARFSLGFVRCSKRLNVAVSRARAMMIIFGNPHLLAVDECWRQLILFCVKNNAYFGCDLPQMVINQKDEVPVCLETFVPSLNTTDDLN.

723-730 (GPPGSGKT) is an ATP binding site. The DEAG box motif lies at 862–865 (DEAG).

This sequence belongs to the DNA2/NAM7 helicase family. SDE3 subfamily. In terms of assembly, forms a complex with piwi and fs(1)Yb; this interaction is required for proper piRNA loading and nuclear localization of piwi. The interaction of piwi and fs(1)Yb is likely to occur via armi. In terms of tissue distribution, abundant in oocytes and syncytial blastoderm. Expressed at low level throughout development, including somatic tissues. First apparent early in oogenesis, in the cytoplasm of stem cells and mitotically dividing cystoblasts. In regions 2a and 2b of the germarium, it is most concentrated in the center of the germline cysts, where the pro-oocyte is located. In stage 1 and early stage 2 egg chambers, it accumulates at the anterior of the oocyte, near the ring canals. It also extends through the ring canals forming a branched structure that links the early oocyte with adjacent nurse cells. In stage 3 cysts, it accumulates at the posterior cortex and localizes to extensions that pass through the oocyte into the nurse cells. Through stages 4 to 7, it continues to be somewhat enriched at the posterior cortex of the oocyte, but at significantly lower level. In stage 9 to 10 egg chambers, it is found throughout the cytoplasm of the oocyte and nurse cells, with slight enrichment at the oocyte cortex.

It is found in the cytoplasm. It catalyses the reaction ATP + H2O = ADP + phosphate + H(+). Functionally, probable RNA helicase required for axial polarization of the oocyte during early and mid oogenesis. Plays a central role in RNA interference (RNAi) process, a process that mediates mRNA destruction of translational repression. Required for the assembly of the RISC complex, a complex required for target RNA destruction or repression. May be required in the RISC assembly to unwind miRNAs, in the production of single-stranded miRNA from the double-stranded miRNA, a key step in RISC formation. Required both for the translational control of oskar (osk) mRNA and cytoskeletal polarization in the oocyte. Required for somatic primary piRNA biogenesis. Involved in repression of long interspersed nuclear elements (LINEs) including HeT-A, I-element and TART LINEs. The polypeptide is Probable RNA helicase armi (Drosophila melanogaster (Fruit fly)).